The primary structure comprises 37 residues: Large ribosomal subunit protein bL36 (37 aa).

The protein belongs to the bacterial ribosomal protein bL36 family.

In Laribacter hongkongensis (strain HLHK9), this protein is Large ribosomal subunit protein bL36.